We begin with the raw amino-acid sequence, 748 residues long: Cysteine--tRNA ligase, cytoplasmic (748 aa).

The segment at 1–25 (MAAAPAEQGKGKRVQPPWSPPEGTK) is disordered. C55 contributes to the Zn(2+) binding site. G56 contacts L-cysteine. A 'HIGH' region motif is present at residues 57-67 (PTVYDASHMGH). T96 serves as a coordination point for L-cysteine. Residues 101–104 (KIIK) carry the 'KIIK' region motif. Zn(2+)-binding residues include C348, H373, and E377. H373 contributes to the L-cysteine binding site. A 'KMSKS' region motif is present at residues 406 to 410 (KMSKS). K409 contacts ATP. 2 stretches are compositionally biased toward basic and acidic residues: residues 656 to 679 (KIEE…EAAK) and 686 to 717 (PPHE…KELS). A disordered region spans residues 656-719 (KIEEEKKRKK…DTEGKELSKG (64 aa)).

Belongs to the class-I aminoacyl-tRNA synthetase family. Homodimer. The cofactor is Zn(2+).

It localises to the cytoplasm. It carries out the reaction tRNA(Cys) + L-cysteine + ATP = L-cysteinyl-tRNA(Cys) + AMP + diphosphate. Catalyzes the ATP-dependent ligation of cysteine to tRNA(Cys). This chain is Cysteine--tRNA ligase, cytoplasmic (CARS1), found in Gallus gallus (Chicken).